The sequence spans 611 residues: Threonine--tRNA ligase (611 aa).

The tract at residues 1–145 (MRLLLIHSDH…TILPGEGAAA (145 aa)) is editing domain. The interval 195–487 (VHVDLMRAKE…TAAQEVPSFP (293 aa)) is catalytic. Zn(2+) contacts are provided by cysteine 287, histidine 339, and histidine 460.

Belongs to the class-II aminoacyl-tRNA synthetase family. Homodimer. Zn(2+) serves as cofactor.

It is found in the cytoplasm. The catalysed reaction is tRNA(Thr) + L-threonine + ATP = L-threonyl-tRNA(Thr) + AMP + diphosphate + H(+). Catalyzes the attachment of threonine to tRNA(Thr) in a two-step reaction: L-threonine is first activated by ATP to form Thr-AMP and then transferred to the acceptor end of tRNA(Thr). Also edits incorrectly charged L-seryl-tRNA(Thr). This chain is Threonine--tRNA ligase, found in Methanoculleus marisnigri (strain ATCC 35101 / DSM 1498 / JR1).